Reading from the N-terminus, the 139-residue chain is Putative pre-16S rRNA nuclease (139 aa).

Belongs to the YqgF nuclease family.

Its subcellular location is the cytoplasm. In terms of biological role, could be a nuclease involved in processing of the 5'-end of pre-16S rRNA. The sequence is that of Putative pre-16S rRNA nuclease from Thermoanaerobacter pseudethanolicus (strain ATCC 33223 / 39E) (Clostridium thermohydrosulfuricum).